The sequence spans 296 residues: 4-hydroxy-tetrahydrodipicolinate synthase (296 aa).

Threonine 49 contributes to the pyruvate binding site. Residue tyrosine 137 is the Proton donor/acceptor of the active site. Lysine 165 (schiff-base intermediate with substrate) is an active-site residue. Isoleucine 207 serves as a coordination point for pyruvate.

This sequence belongs to the DapA family. In terms of assembly, homotetramer; dimer of dimers.

The protein resides in the cytoplasm. The catalysed reaction is L-aspartate 4-semialdehyde + pyruvate = (2S,4S)-4-hydroxy-2,3,4,5-tetrahydrodipicolinate + H2O + H(+). It participates in amino-acid biosynthesis; L-lysine biosynthesis via DAP pathway; (S)-tetrahydrodipicolinate from L-aspartate: step 3/4. Its function is as follows. Catalyzes the condensation of (S)-aspartate-beta-semialdehyde [(S)-ASA] and pyruvate to 4-hydroxy-tetrahydrodipicolinate (HTPA). This chain is 4-hydroxy-tetrahydrodipicolinate synthase, found in Bradyrhizobium diazoefficiens (strain JCM 10833 / BCRC 13528 / IAM 13628 / NBRC 14792 / USDA 110).